The primary structure comprises 177 residues: Coatomer subunit zeta-1 (177 aa).

This sequence belongs to the adaptor complexes small subunit family. As to quaternary structure, oligomeric complex that consists of at least the alpha, beta, beta', gamma, delta, epsilon and zeta subunits.

It is found in the cytoplasm. The protein localises to the golgi apparatus membrane. The protein resides in the cytoplasmic vesicle. It localises to the COPI-coated vesicle membrane. In terms of biological role, the coatomer is a cytosolic protein complex that binds to dilysine motifs and reversibly associates with Golgi non-clathrin-coated vesicles, which further mediate biosynthetic protein transport from the ER, via the Golgi up to the trans Golgi network. Coatomer complex is required for budding from Golgi membranes, and is essential for the retrograde Golgi-to-ER transport of dilysine-tagged proteins. The zeta subunit may be involved in regulating the coat assembly and, hence, the rate of biosynthetic protein transport due to its association-dissociation properties with the coatomer complex. The chain is Coatomer subunit zeta-1 from Arabidopsis thaliana (Mouse-ear cress).